The sequence spans 509 residues: MEELQEYLKIEKSWQQDFLYPLFFQEYIYTLAHDHGLNRSILYESAENLGYDNKSSSLIVKRFIDRMYQQNHFIISSNSNSSNQKKFLGHNKNLDLKIISEGFAVIVEIPFSLRLVSSLEGKELVKSCNLRSIHSIFSFLEDKFSHLNYVSDILIPHPIHPEILVQAFRVWVQDVPSLHLLRFFLYEYRNWNSLITPKKSIYTFSKENQRFFLFLYNFYVYKYESMFVFLRKQSSHLRSTSFGALLERTHFYGKREHLVVLFRNDFQSTLCLVKDPFIHYVRYQAKSFLAARGTPLMMNKWKYYLVNFWQSYFYFWSQPGRIHINQLSNYSLDFLGYLSSVRLTFSVVRSQMLENSFLIDIAIKKFDTIVPIIPLLGSLAKAKFCNALGHPISKPVRTASSDFDIIDRFGRICKNLFHYHSGSSKKKSLYRIKYILRLSCARTLARKHKSTVRAFLKRLGSELFEEFFTEEEEVLSLIFPRASSPLRRLYRERVWYLDIIRISDLVNHD.

This sequence belongs to the intron maturase 2 family. MatK subfamily.

It is found in the plastid. The protein localises to the chloroplast. In terms of biological role, usually encoded in the trnK tRNA gene intron. Probably assists in splicing its own and other chloroplast group II introns. The sequence is that of Maturase K from Banksia cuneata (Quairading banksia).